Here is a 285-residue protein sequence, read N- to C-terminus: HTH-type transcriptional regulator MurR (285 aa).

Positions 1–77 constitute an HTH rpiR-type domain; it reads MLYLTKISNA…MALIGEYSAS (77 aa). Residues 37 to 56 constitute a DNA-binding region (H-T-H motif); sequence SRQMAKQLGISQSSIVKFAQ. Residues 128 to 268 enclose the SIS domain; that stretch reads IIEVISKAPF…FVGLVQLNDV (141 aa).

As to quaternary structure, homotetramer.

Its pathway is amino-sugar metabolism; N-acetylmuramate degradation [regulation]. In terms of biological role, represses the expression of the murPQ operon involved in the uptake and degradation of N-acetylmuramic acid (MurNAc). Binds to two adjacent inverted repeats within the operator region. MurNAc 6-phosphate, the substrate of MurQ, is the specific inducer that weakens binding of MurR to the operator. The sequence is that of HTH-type transcriptional regulator MurR from Escherichia coli O139:H28 (strain E24377A / ETEC).